A 608-amino-acid polypeptide reads, in one-letter code: Endo-1,4-beta-xylanase C (608 aa).

A signal peptide spans 1-25 (MKTFSVTKSSVVFAMALGMASTAFA). Residues 40–250 (TITSNQTGKI…VNGEVRGGHM (211 aa)) enclose the GH11 1 domain. Glu-142 functions as the Nucleophile in the catalytic mechanism. Glu-237 functions as the Proton donor in the catalytic mechanism. The span at 263–294 (SDPVSSSSVKSSSSTDAPKSSSSKGNGNVSGK) shows a compositional bias: low complexity. Residues 263–296 (SDPVSSSSVKSSSSTDAPKSSSSKGNGNVSGKID) are disordered. A GH11 2 domain is found at 316 to 514 (NSSVTGNVGS…GSGSFDVTYF (199 aa)). Glu-409 (nucleophile) is an active-site residue. Glu-501 acts as the Proton donor in catalysis. A disordered region spans residues 520–539 (AHPLAQPEPESSSSEAKVES). Residues 527–539 (EPESSSSEAKVES) show a composition bias toward low complexity.

It belongs to the glycosyl hydrolase 11 (cellulase G) family.

The enzyme catalyses Endohydrolysis of (1-&gt;4)-beta-D-xylosidic linkages in xylans.. Its pathway is glycan degradation; xylan degradation. In terms of biological role, cleaves xylans with the production of xylose, xylobiose and xylo-oligosaccharides. The chain is Endo-1,4-beta-xylanase C (xynC) from Fibrobacter succinogenes (strain ATCC 19169 / S85).